The sequence spans 356 residues: Fe(3+) ions import ATP-binding protein FbpC 2 (356 aa).

An ABC transporter domain is found at 12 to 246; the sequence is LTVKNLNKFF…PNHLETAKFM (235 aa). ATP is bound at residue 44 to 51; sequence GSSGCGKT.

Belongs to the ABC transporter superfamily. Fe(3+) ion importer (TC 3.A.1.10) family. In terms of assembly, the complex is composed of two ATP-binding proteins (FbpC), two transmembrane proteins (FbpB) and a solute-binding protein (FbpA).

It is found in the cell inner membrane. It carries out the reaction Fe(3+)(out) + ATP + H2O = Fe(3+)(in) + ADP + phosphate + H(+). Part of the ABC transporter complex FbpABC involved in Fe(3+) ions import. Responsible for energy coupling to the transport system. The chain is Fe(3+) ions import ATP-binding protein FbpC 2 from Haemophilus influenzae (strain ATCC 51907 / DSM 11121 / KW20 / Rd).